We begin with the raw amino-acid sequence, 283 residues long: 4-diphosphocytidyl-2-C-methyl-D-erythritol kinase (283 aa).

The active site involves K10. Position 95 to 105 (95 to 105 (PVAAGLGGGSS)) interacts with ATP. The active site involves D137.

This sequence belongs to the GHMP kinase family. IspE subfamily.

The catalysed reaction is 4-CDP-2-C-methyl-D-erythritol + ATP = 4-CDP-2-C-methyl-D-erythritol 2-phosphate + ADP + H(+). Its pathway is isoprenoid biosynthesis; isopentenyl diphosphate biosynthesis via DXP pathway; isopentenyl diphosphate from 1-deoxy-D-xylulose 5-phosphate: step 3/6. Its function is as follows. Catalyzes the phosphorylation of the position 2 hydroxy group of 4-diphosphocytidyl-2C-methyl-D-erythritol. The chain is 4-diphosphocytidyl-2-C-methyl-D-erythritol kinase from Pediococcus pentosaceus (strain ATCC 25745 / CCUG 21536 / LMG 10740 / 183-1w).